The sequence spans 772 residues: PDZ domain-containing protein 4 (772 aa).

One can recognise a PDZ domain in the interval 136–221; sequence EVELCKNSHQ…NISLLVARPE (86 aa). A disordered region spans residues 239-320; sequence DFGSENEGDL…TNTPGSLRKF (82 aa). At serine 242 the chain carries Phosphoserine. Positions 287–303 are enriched in basic and acidic residues; it reads RTDESTRNEESSEHDLL. Residues 394-424 adopt a coiled-coil conformation; sequence VNRNESLGHEMAMLEEELRHLEFKCRNILRA. Residues 450-573 form a disordered region; sequence ASEPKKHELS…VGPEGSPYLS (124 aa). Positions 452–472 are enriched in basic and acidic residues; sequence EPKKHELSDISELPEKSDKDS. Residue serine 459 is modified to Phosphoserine. Composition is skewed to polar residues over residues 473 to 484 and 502 to 511; these read TSAYNTGESCRS and AGNSNLNRTP. Over residues 535-552 the composition is skewed to basic and acidic residues; it reads LSRDPEVGRRQHTEERVR.

Its subcellular location is the cytoplasm. The protein localises to the cell cortex. The protein is PDZ domain-containing protein 4 (Pdzd4) of Mus musculus (Mouse).